Reading from the N-terminus, the 279-residue chain is ATP-dependent Clp protease proteolytic subunit-related protein 2, chloroplastic (279 aa).

The N-terminal 54 residues, 1 to 54 (MAVSFNTTLHQPSLSPSCSIKLYSGLKPQSASFLASGYQNLNKEFYGRVYKSLQ), are a transit peptide targeting the chloroplast.

The protein belongs to the peptidase S14 family. In terms of assembly, component of the chloroplastic Clp protease core complex which consist of at least 16 proteins: CLPP4 (3 copies), CLPP5 (3 copies), CLPR4 (2 copies), ClpP1 (1 copy), CLPP6 (1 copy), CLPR2 (1 copy), CLPT1 (1 copy), CLPT2 (1 copy) and 3 copies of CLPP3 and/or CLPR1 and/or CLPR3. The core complex is organized in two heptameric rings, one containing CLPP3,4,5,6 in a 1:2:3:1 ratio and the other CLPP1 and CLPR1,2,3,4 in a 3:1:1:1:1 ratio. Expressed at least in leaves and roots.

It is found in the plastid. The protein resides in the chloroplast. Functionally, required for chloroplast development and integrity. Involved in the regulation of plastoglobules formation. The chain is ATP-dependent Clp protease proteolytic subunit-related protein 2, chloroplastic from Arabidopsis thaliana (Mouse-ear cress).